The chain runs to 206 residues: Sclerostin domain-containing protein 1 (206 aa).

The signal sequence occupies residues 1–22 (MLLSAIHFYGLLLACTFTRSYS). The disordered stretch occupies residues 40–68 (APASPSSNSTLNQARNGGRHYAGTGSDRN). The span at 43–54 (SPSSNSTLNQAR) shows a compositional bias: polar residues. An N-linked (GlcNAc...) asparagine glycan is attached at Asn47. 4 cysteine pairs are disulfide-bonded: Cys75–Cys133, Cys89–Cys147, Cys100–Cys163, and Cys104–Cys165. The region spanning 75–170 (CRELRSTKYI…TACKCKRYTR (96 aa)) is the CTCK domain. Asn173 carries N-linked (GlcNAc...) asparagine glycosylation. Positions 176-206 (SHNFEGTSQAKPVQHHKERKRASKSSKHSTS) are disordered. Over residues 188–206 (VQHHKERKRASKSSKHSTS) the composition is skewed to basic residues.

The protein belongs to the sclerostin family. In terms of assembly, interacts with LRP6.

The protein localises to the secreted. Its function is as follows. Can activate or inhibit Wnt signaling in a context-dependent manner. Activates the canonical Wnt pathway whereby acts through Disheveled proteins and beta-catenin. Antagonises Wnt signaling through the canonical pathways presumably by blocking accessibility of certain WNTs to their receptors. Induces posterior neural markers via components of the canonical Wnt pathway. The protein is Sclerostin domain-containing protein 1 (SOSTDC1) of Gallus gallus (Chicken).